Reading from the N-terminus, the 612-residue chain is Chaperone protein DnaK (612 aa).

Thr-174 bears the Phosphothreonine; by autocatalysis mark. Positions 578-612 (GAQAGAQGQGAAGGQKQDGNVYDADYKVVDDDKKE) are disordered. Positions 601–612 (ADYKVVDDDKKE) are enriched in basic and acidic residues.

It belongs to the heat shock protein 70 family.

Its function is as follows. Acts as a chaperone. In Moorella thermoacetica (strain ATCC 39073 / JCM 9320), this protein is Chaperone protein DnaK.